The sequence spans 83 residues: NAD(P)H-quinone oxidoreductase subunit L, organellar chromatophore (83 aa).

2 helical membrane passes run 17–37 and 53–73; these read LLLAYGVLGGLYLILVPLALY and LFVYGLVFLFFPGLILLSPFL.

Belongs to the complex I NdhL subunit family. NDH-1 can be composed of about 15 different subunits; different subcomplexes with different compositions have been identified which probably have different functions.

The protein resides in the plastid. The protein localises to the organellar chromatophore thylakoid membrane. It catalyses the reaction a plastoquinone + NADH + (n+1) H(+)(in) = a plastoquinol + NAD(+) + n H(+)(out). The enzyme catalyses a plastoquinone + NADPH + (n+1) H(+)(in) = a plastoquinol + NADP(+) + n H(+)(out). Functionally, NDH-1 shuttles electrons from an unknown electron donor, via FMN and iron-sulfur (Fe-S) centers, to quinones in the respiratory and/or the photosynthetic chain. The immediate electron acceptor for the enzyme in this species is believed to be plastoquinone. Couples the redox reaction to proton translocation, and thus conserves the redox energy in a proton gradient. This Paulinella chromatophora protein is NAD(P)H-quinone oxidoreductase subunit L, organellar chromatophore.